The sequence spans 338 residues: Nicotinate-nucleotide--dimethylbenzimidazole phosphoribosyltransferase (338 aa).

Glu-305 acts as the Proton acceptor in catalysis.

Belongs to the CobT family. Homodimer.

It catalyses the reaction 5,6-dimethylbenzimidazole + nicotinate beta-D-ribonucleotide = alpha-ribazole 5'-phosphate + nicotinate + H(+). It functions in the pathway nucleoside biosynthesis; alpha-ribazole biosynthesis; alpha-ribazole from 5,6-dimethylbenzimidazole: step 1/2. Functionally, catalyzes the synthesis of alpha-ribazole-5'-phosphate from nicotinate mononucleotide (NAMN) and 5,6-dimethylbenzimidazole (DMB). This chain is Nicotinate-nucleotide--dimethylbenzimidazole phosphoribosyltransferase (cobU), found in Sinorhizobium sp.